Here is a 363-residue protein sequence, read N- to C-terminus: GDP-fucose transporter 1 (363 aa).

A run of 8 helical transmembrane segments spans residues 33–55 (FLLRALQIALVVSLYWVTSISMV), 75–97 (VTFYQCLVTSLLCKGLSTLATCC), 110–129 (LKVARSVLPLSVVFIGMITF), 139–161 (VPFYNVGRSLTTVFNVLLSYLLL), 166–184 (SFYALLTCGVIIGGFWLGI), 194–213 (SLTGTIFGVLASLCVSLNAI), 226–248 (IWRLTFYNNVNACVLFLPLMIVL), and 263–285 (AHFWLMMTLGGLFGFAIGYVTGL).

This sequence belongs to the TPT transporter family. SLC35C subfamily.

The protein localises to the golgi apparatus membrane. The enzyme catalyses GMP(out) + GDP-beta-L-fucose(in) = GMP(in) + GDP-beta-L-fucose(out). Functionally, antiporter specific for GDP-l-fucose and depending on the concomitant reverse transport of GMP. Involved in GDP-fucose import from the cytoplasm into the Golgi lumen. In Mus musculus (Mouse), this protein is GDP-fucose transporter 1 (Slc35c1).